A 96-amino-acid polypeptide reads, in one-letter code: Pore-forming peptide amoebapore B (96 aa).

The signal sequence occupies residues 1 to 19; it reads MRAIIFVLIFAIAFAATRE. Positions 20 to 96 constitute a Saposin B-type domain; it reads GAILCNLCKD…VVVCEKIHAC (77 aa). Intrachain disulfides connect cysteine 24–cysteine 96, cysteine 27–cysteine 90, and cysteine 54–cysteine 65.

In terms of assembly, monomer. Homodimer. Hexamer; formed during insertion in the membrane.

The protein resides in the cytoplasmic granule. Its function is as follows. Forms pores in the cell membrane of host cells. Has antibacterial activity against M.luteus, no activity against E.coli. Implicated in the cytolytic activity of the parasite. The sequence is that of Pore-forming peptide amoebapore B from Entamoeba histolytica (strain ATCC 30459 / HM-1:IMSS / ABRM).